The chain runs to 224 residues: UPF0173 metal-dependent hydrolase TTHA1283 (224 aa).

The protein belongs to the UPF0173 family.

The polypeptide is UPF0173 metal-dependent hydrolase TTHA1283 (Thermus thermophilus (strain ATCC 27634 / DSM 579 / HB8)).